Here is a 57-residue protein sequence, read N- to C-terminus: Andropin (57 aa).

An N-terminal signal peptide occupies residues M1 to A23.

This sequence belongs to the andropin family. Ejaculatory duct of adult males.

The protein resides in the secreted. Male-specific peptide with moderate activity against Gram-positive bacteria. The protein is Andropin (Anp) of Drosophila sechellia (Fruit fly).